The chain runs to 66 residues: Large ribosomal subunit protein bL35 (66 aa).

The protein belongs to the bacterial ribosomal protein bL35 family.

The polypeptide is Large ribosomal subunit protein bL35 (Brucella anthropi (strain ATCC 49188 / DSM 6882 / CCUG 24695 / JCM 21032 / LMG 3331 / NBRC 15819 / NCTC 12168 / Alc 37) (Ochrobactrum anthropi)).